A 319-amino-acid chain; its full sequence is Protein-methionine methyltransferase laeA (319 aa).

Residues 269 to 293 form a disordered region; sequence REPQSGTCSVQRENGANGDRSTLSA. Residues 270-293 show a composition bias toward polar residues; it reads EPQSGTCSVQRENGANGDRSTLSA.

Belongs to the methyltransferase superfamily. LaeA methyltransferase family. As to quaternary structure, component of the heterotrimeric velvet complex composed of laeA, veA and velB; VeA acting as a bridging protein between laeA and velB.

Its subcellular location is the nucleus. The catalysed reaction is L-methionyl-[protein] + S-adenosyl-L-methionine = S-methyl-L-methionyl-[protein] + S-adenosyl-L-homocysteine. In terms of biological role, methyltransferase; component of the velvet transcription factor complex that acts as a global regulator for secondary metabolite gene expression. Controls the expression of the chaetoglobosin A biosynthesis cluster via the cheR transcription factor and the subsequent production of chaetoglobosin A. Positively regulates the expression of smtA and negatively regulates the expression of velB. LaeA also regulates pigmentation and spores production. This chain is Protein-methionine methyltransferase laeA, found in Chaetomium globosum (strain ATCC 6205 / CBS 148.51 / DSM 1962 / NBRC 6347 / NRRL 1970) (Soil fungus).